Reading from the N-terminus, the 316-residue chain is Large ribosomal subunit protein uL10 (316 aa).

Residues 289-316 form a disordered region; sequence AAAAAPAKEAPKEESEESDEDMGFGLFD.

This sequence belongs to the universal ribosomal protein uL10 family. In terms of assembly, P0 forms a pentameric complex by interaction with dimers of P1 and P2. Post-translationally, phosphorylated.

Its subcellular location is the nucleus. The protein resides in the cytoplasm. In terms of biological role, ribosomal protein P0 is the functional equivalent of E.coli protein L10. The polypeptide is Large ribosomal subunit protein uL10 (RPLP0) (Gallus gallus (Chicken)).